The sequence spans 118 residues: UPF0382 membrane protein C1782.12c (118 aa).

The first 18 residues, 1 to 18, serve as a signal peptide directing secretion; that stretch reads MTIWNVAALTGLLSVGLG. Topologically, residues 19-40 are lumenal; that stretch reads AYGSHGLQKRVQDPHLLKSWST. The chain crosses the membrane as a helical span at residues 41–61; sequence ACTYLMFHSLATMAVSLHPVY. Over 62–67 the chain is Cytoplasmic; that stretch reads GKSRWT. Residues 68 to 88 traverse the membrane as a helical segment; it reads GPLLITGSCLFSGTIYGLCLL. Residues 89–96 are Lumenal-facing; it reads PKGHSLRR. Residues 97 to 117 traverse the membrane as a helical segment; the sequence is ILGPLTPIGGLVMLTGWATML. Residue Val118 is a topological domain, cytoplasmic.

This sequence belongs to the UPF0382 family.

It is found in the endoplasmic reticulum membrane. The protein is UPF0382 membrane protein C1782.12c of Schizosaccharomyces pombe (strain 972 / ATCC 24843) (Fission yeast).